Here is a 593-residue protein sequence, read N- to C-terminus: Solute carrier family 40 member 3, chloroplastic (593 aa).

Positions 1-23 are disordered; sequence MSMSKLLSPPPTSPPGPALSRLP. Residues 1–51 constitute a chloroplast transit peptide; it reads MSMSKLLSPPPTSPPGPALSRLPCRRVAPPPVLPFPFPLRRLTSRRVFATS. Residues 8 to 17 show a composition bias toward pro residues; that stretch reads SPPPTSPPGP. A run of 11 helical transmembrane segments spans residues 181–201, 219–239, 253–273, 303–322, 323–343, 403–423, 431–451, 462–482, 493–513, 530–550, and 557–577; these read ILPV…AGPL, AAIQ…AFAV, FAVL…LGII, LLCE…KNNP, LTCI…LIFL, YVFV…TFLI, VIGA…FATA, AGAA…VVYL, LFAF…YSAI, IGAT…AVAV, and HFGA…GMYC.

The protein belongs to the ferroportin (FP) (TC 2.A.100) family. SLC40A subfamily.

The protein localises to the membrane. It localises to the plastid. It is found in the chloroplast envelope. Functionally, may be involved in iron transport and iron homeostasis. This chain is Solute carrier family 40 member 3, chloroplastic, found in Oryza sativa subsp. japonica (Rice).